The sequence spans 345 residues: Phosphoribosylformylglycinamidine cyclo-ligase (345 aa).

It belongs to the AIR synthase family.

Its subcellular location is the cytoplasm. The catalysed reaction is 2-formamido-N(1)-(5-O-phospho-beta-D-ribosyl)acetamidine + ATP = 5-amino-1-(5-phospho-beta-D-ribosyl)imidazole + ADP + phosphate + H(+). It functions in the pathway purine metabolism; IMP biosynthesis via de novo pathway; 5-amino-1-(5-phospho-D-ribosyl)imidazole from N(2)-formyl-N(1)-(5-phospho-D-ribosyl)glycinamide: step 2/2. The polypeptide is Phosphoribosylformylglycinamidine cyclo-ligase (Anaeromyxobacter dehalogenans (strain 2CP-1 / ATCC BAA-258)).